A 614-amino-acid polypeptide reads, in one-letter code: NEDD8 ultimate buster 1 (614 aa).

2 coiled-coil regions span residues 36–71 (LAVKDLAKKYSERLECCENEVENIIEEIRRKAIERG) and 151–206 (NVKA…MVVD). UBA domains are found at residues 373 to 413 (YIDP…ISNR), 423 to 469 (EEKE…LLSN), and 488 to 528 (SPSQ…LAHH). The Nuclear localization signal motif lies at 413–430 (RREELAQIRKEEKEKRRR). The interval 426-473 (EKRRRRLENVNTLRGMGYSTQAAKQALHQARGNLDDALKVLLSNPHMW) is NEDD8-binding 1. The interval 531 to 590 (SLPPDLQFSGEDSSPTPSTSPSDSAGTSSASTDEDMETEAVNEILEDIPEHEEDYLDSTL) is disordered. Low complexity predominate over residues 539 to 561 (SGEDSSPTPSTSPSDSAGTSSAS). Residues 549-597 (TSPSDSAGTSSASTDEDMETEAVNEILEDIPEHEEDYLDSTLEDEEVII) form an NEDD8-binding 2 region. Residues 562–590 (TDEDMETEAVNEILEDIPEHEEDYLDSTL) show a composition bias toward acidic residues.

Directly interacts with NEDD8 and PSMD4/S5a, a member of the regulatory subunit of the 26S proteasome. Interacts with AIPL1. The interaction with UBD via UBA domains facilitates the linking of UBD-conjugated target protein to the proteasome complex and accelerates UBD degradation and that of its conjugates.

It is found in the nucleus. Functionally, specific down-regulator of the NEDD8 conjugation system. Recruits NEDD8, UBD, and their conjugates to the proteasome for degradation. This is NEDD8 ultimate buster 1 (Nub1) from Mus musculus (Mouse).